Consider the following 266-residue polypeptide: MSRIARRFEALRAAGRKALIPYVTAGDPNPDNTVPLMHAMVAAGADIIELGVPFSDPMADGPVIQQACERALRHHVSLRQVIGMVKTFREQDAETPVVLMGYLNPVEIMGYEAFAIAAASAGVDGLLTVDLPPEESHDLVQVLRSHGVDPIFLLAPTSHEARIKRICDAASGFVYYVSLKGVTGAATLDVDAVAEKLAAIRAHTDLPLGVGFGIRDADSAARVSRVADAVVVGSALVNRIAEHEQDPEAGRRVVSELLAEMRKAMD.

Active-site proton acceptor residues include Glu-49 and Asp-60.

It belongs to the TrpA family. In terms of assembly, tetramer of two alpha and two beta chains.

It carries out the reaction (1S,2R)-1-C-(indol-3-yl)glycerol 3-phosphate + L-serine = D-glyceraldehyde 3-phosphate + L-tryptophan + H2O. It functions in the pathway amino-acid biosynthesis; L-tryptophan biosynthesis; L-tryptophan from chorismate: step 5/5. Its function is as follows. The alpha subunit is responsible for the aldol cleavage of indoleglycerol phosphate to indole and glyceraldehyde 3-phosphate. In Thioalkalivibrio sulfidiphilus (strain HL-EbGR7), this protein is Tryptophan synthase alpha chain.